The following is a 262-amino-acid chain: Phosphomannomutase 1 (262 aa).

Alanine 2 is subject to N-acetylalanine. Aspartate 19 serves as the catalytic Nucleophile. Residues aspartate 19 and aspartate 21 each coordinate Mg(2+). Residue aspartate 21 is the Proton donor/acceptor of the active site. Alpha-D-mannose 1-phosphate-binding residues include arginine 28, arginine 132, arginine 143, arginine 150, methionine 186, serine 188, and aspartate 190. The Mg(2+) site is built by asparagine 218, tyrosine 230, aspartate 232, and threonine 235. Serine 242 bears the Phosphoserine mark.

This sequence belongs to the eukaryotic PMM family. In terms of assembly, homodimer. Requires Mg(2+) as cofactor. In terms of tissue distribution, present in brain, where it is restricted to neuronal cell bodies. Present at lower levels in pancreas, liver, lung, gonads, uterus, adrenal glands and pituitary (at protein level). Undetectable in intestine.

The protein localises to the cytoplasm. It catalyses the reaction alpha-D-mannose 1-phosphate = D-mannose 6-phosphate. Its pathway is nucleotide-sugar biosynthesis; GDP-alpha-D-mannose biosynthesis; alpha-D-mannose 1-phosphate from D-fructose 6-phosphate: step 2/2. Its activity is regulated as follows. IMP, a metabolite whose concentration is elevated in anoxia, inhibits phosphomannomutase and phosphoglucomutase activities and strongly enhances glucose-1,6-bisphosphatase activity. Its function is as follows. Involved in the synthesis of the GDP-mannose and dolichol-phosphate-mannose required for a number of critical mannosyl transfer reactions. In addition, may be responsible for the degradation of glucose-1,6-bisphosphate in ischemic brain. The chain is Phosphomannomutase 1 (Pmm1) from Mus musculus (Mouse).